Consider the following 89-residue polypeptide: Small ribosomal subunit protein uS15 (89 aa).

It belongs to the universal ribosomal protein uS15 family. Part of the 30S ribosomal subunit. Forms a bridge to the 50S subunit in the 70S ribosome, contacting the 23S rRNA.

One of the primary rRNA binding proteins, it binds directly to 16S rRNA where it helps nucleate assembly of the platform of the 30S subunit by binding and bridging several RNA helices of the 16S rRNA. Functionally, forms an intersubunit bridge (bridge B4) with the 23S rRNA of the 50S subunit in the ribosome. This is Small ribosomal subunit protein uS15 from Cupriavidus necator (strain ATCC 17699 / DSM 428 / KCTC 22496 / NCIMB 10442 / H16 / Stanier 337) (Ralstonia eutropha).